The primary structure comprises 469 residues: MTDRARLRLHDTAAGVVRDFVPLRPGHVSIYLCGATVQGLPHIGHVRSGVAFDILRRWLLARGYDVAFIRNVTDIEDKILAKAAAAGRPWWEWAATHERAFTAAYDALDVLPPSAEPRATGHITQMIEMIERLIQAGHAYTGGGDVYFDVLSYPEYGQLSGHKIDDVHQGEGVAAGKRDQRDFTLWKGEKPGEPSWPTPWGRGRPGWHLECSAMARSYLGPEFDIHCGGMDLVFPHHENEIAQSRAAGDGFARYWLHNGWVTMGGEKMSKSLGNVLSMPAMLQRVRPAELRYYLGSAHYRSMLEFSETAMQDAVKAYVGLEDFLHRVRTRVGAVCPGDPTPRFAEALDDDLSVPIALAEIHHVRAEGNRALDAGDHDGALRSASAIRAMMGILGCDPLDQRWESRDETSAALAAVDVLVQAELQNREKAREQRNWALADEIRGRLKRAGIEVTDTADGPQWSLLGGDTK.

Position 33 (Cys-33) interacts with Zn(2+). A 'HIGH' region motif is present at residues Ala-35–His-45. Residues Cys-211, His-236, and Glu-240 each contribute to the Zn(2+) site. The 'KMSKS' region signature appears at Lys-267–Ser-271. Lys-270 serves as a coordination point for ATP.

The protein belongs to the class-I aminoacyl-tRNA synthetase family. As to quaternary structure, monomer. Zn(2+) serves as cofactor.

Its subcellular location is the cytoplasm. It catalyses the reaction tRNA(Cys) + L-cysteine + ATP = L-cysteinyl-tRNA(Cys) + AMP + diphosphate. This Mycobacterium bovis (strain ATCC BAA-935 / AF2122/97) protein is Cysteine--tRNA ligase (cysS).